The primary structure comprises 416 residues: Calreticulin (416 aa).

N54 carries N-linked (GlcNAc...) asparagine glycosylation. A disulfide bridge links C108 with C140. Y112, K114, Y131, and D138 together coordinate an alpha-D-glucoside. 7 repeat units span residues 194–205, 213–224, 230–241, 248–259, 263–273, 277–287, and 291–301. Residues 194 to 259 form a 4 X approximate repeats region; sequence KQSGSVYTDW…EAKKPEDWDD (66 aa). Residues 209–281 form a disordered region; that stretch reads KQIKDPEAKK…NPDYKGEWKP (73 aa). Positions 210–255 are enriched in basic and acidic residues; the sequence is QIKDPEAKKPEDWEDKEYIPDPEDKKPEGYDDIPKEITDPEAKKPE. A 3 X approximate repeats region spans residues 263–301; sequence GEWTAPTIPNPDYKGEWKPKKIKNPNFKGKWKAPMIDNP. E321 contributes to the an alpha-D-glucoside binding site. Residues 349 to 378 show a composition bias toward basic and acidic residues; that stretch reads ETWGKNKDAEKAAFDEAEKKKEEEEAKDDP. A disordered region spans residues 349 to 416; that stretch reads ETWGKNKDAE…EDDEDVHDEL (68 aa). The span at 379 to 416 shows a compositional bias: acidic residues; the sequence is TESDDEKPDEEGESDGEGDDESKDIDNEEDDEDVHDEL. The short motif at 413-416 is the Prevents secretion from ER element; the sequence is HDEL.

The protein belongs to the calreticulin family.

The protein resides in the endoplasmic reticulum lumen. Molecular calcium-binding chaperone promoting folding, oligomeric assembly and quality control in the ER via the calreticulin/calnexin cycle. This lectin may interact transiently with almost all of the monoglucosylated glycoproteins that are synthesized in the ER. This Berberis stolonifera (Barberry) protein is Calreticulin.